The primary structure comprises 94 residues: Large ribosomal subunit protein uL23 (94 aa).

The protein belongs to the universal ribosomal protein uL23 family. In terms of assembly, part of the 50S ribosomal subunit. Contacts protein L29, and trigger factor when it is bound to the ribosome.

One of the early assembly proteins it binds 23S rRNA. One of the proteins that surrounds the polypeptide exit tunnel on the outside of the ribosome. Forms the main docking site for trigger factor binding to the ribosome. In Dehalococcoides mccartyi (strain ATCC BAA-2266 / KCTC 15142 / 195) (Dehalococcoides ethenogenes (strain 195)), this protein is Large ribosomal subunit protein uL23.